We begin with the raw amino-acid sequence, 384 residues long: Beta-lactamase (384 aa).

The first 29 residues, 1-29 (MDNSMKNIFRQGRLFIALSLAMTSISAFA), serve as a signal peptide directing secretion. Catalysis depends on S87, which acts as the Acyl-ester intermediate. Y172 acts as the Proton acceptor in catalysis. 337-339 (KTG) serves as a coordination point for substrate.

Belongs to the class-C beta-lactamase family.

It localises to the periplasm. The catalysed reaction is a beta-lactam + H2O = a substituted beta-amino acid. Functionally, this protein is a serine beta-lactamase with a substrate specificity for cephalosporins. The polypeptide is Beta-lactamase (ampC) (Providencia stuartii).